Reading from the N-terminus, the 364-residue chain is Alanine racemase (364 aa).

K39 functions as the Proton acceptor; specific for D-alanine in the catalytic mechanism. Position 39 is an N6-(pyridoxal phosphate)lysine (K39). R137 serves as a coordination point for substrate. The active-site Proton acceptor; specific for L-alanine is Y258. M306 contacts substrate.

The protein belongs to the alanine racemase family. The cofactor is pyridoxal 5'-phosphate.

The catalysed reaction is L-alanine = D-alanine. The protein operates within amino-acid biosynthesis; D-alanine biosynthesis; D-alanine from L-alanine: step 1/1. Catalyzes the interconversion of L-alanine and D-alanine. May also act on other amino acids. In Methylobacterium sp. (strain 4-46), this protein is Alanine racemase (alr).